A 152-amino-acid polypeptide reads, in one-letter code: Deoxyuridine 5'-triphosphate nucleotidohydrolase (152 aa).

Substrate contacts are provided by residues 72-74 (RSG), asparagine 85, and 89-91 (TID).

Belongs to the dUTPase family. Mg(2+) is required as a cofactor.

It carries out the reaction dUTP + H2O = dUMP + diphosphate + H(+). It participates in pyrimidine metabolism; dUMP biosynthesis; dUMP from dCTP (dUTP route): step 2/2. Its function is as follows. This enzyme is involved in nucleotide metabolism: it produces dUMP, the immediate precursor of thymidine nucleotides and it decreases the intracellular concentration of dUTP so that uracil cannot be incorporated into DNA. In Afipia carboxidovorans (strain ATCC 49405 / DSM 1227 / KCTC 32145 / OM5) (Oligotropha carboxidovorans), this protein is Deoxyuridine 5'-triphosphate nucleotidohydrolase.